The primary structure comprises 357 residues: Glucose-6-phosphatase catalytic subunit 1 (357 aa).

Over 1–28 (MEEGMNILHDFGIQSTRYLQVNYQDSQD) the chain is Lumenal. The chain crosses the membrane as a helical span at residues 29–49 (WFILVSVIADLRNAFYVLFPI). Topologically, residues 50-60 (WFHLKETVGIN) are cytoplasmic. The chain crosses the membrane as a helical span at residues 61 to 81 (LLWVAVVGDWFNLVFKWILFG). At 82–117 (QRPYWWVLDTDYYSNSSVPIIKQFPVTCETGPGSPS) the chain is on the lumenal side. Arg83 is a binding site for substrate. Asn96 carries N-linked (GlcNAc...) asparagine glycosylation. The helical transmembrane segment at 118–138 (GHAMGAAGVYYVMVTSTLAIF) threads the bilayer. The active-site Proton donor is the His119. At 139 to 147 (RGKKKPTYG) the chain is on the cytoplasmic side. Residues 148 to 168 (FRCLNVILWLGFWAVQLNVCL) traverse the membrane as a helical segment. The Lumenal portion of the chain corresponds to 169 to 179 (SRIYLAAHFPH). Substrate is bound at residue Arg170. Residue His176 is the Nucleophile of the active site. The helical transmembrane segment at 180-202 (QVVAGVLSGIAVAETFSHIRGIY) threads the bilayer. Residues 203-211 (NASLRKYCL) are Cytoplasmic-facing. A helical transmembrane segment spans residues 212–232 (ITIFLFGFALGFYLLLKGLGV). At 233–254 (DLLWTLEKAKRWCERPEWVHLD) the chain is on the lumenal side. The helical transmembrane segment at 255-275 (TTPFASLFKNLGTLLGLGLAL) threads the bilayer. Topologically, residues 276–291 (NSSMYRKSCKGELSKL) are cytoplasmic. The chain crosses the membrane as a helical span at residues 292–312 (LPFRFACIVASLVLLHLFDSL). At 313–320 (KPPSQVEL) the chain is on the lumenal side. A helical membrane pass occupies residues 321–341 (IFYILSFCKSATVPFASVSLI). Residues 342 to 357 (PYCLARILGQTHKKSL) lie on the Cytoplasmic side of the membrane. A Prevents secretion from ER motif is present at residues 354–357 (KKSL).

It belongs to the glucose-6-phosphatase family. In terms of tissue distribution, liver and kidney.

It localises to the endoplasmic reticulum membrane. The catalysed reaction is D-glucose 6-phosphate + H2O = D-glucose + phosphate. The protein operates within carbohydrate biosynthesis; gluconeogenesis. Functionally, hydrolyzes glucose-6-phosphate to glucose in the endoplasmic reticulum. Forms with the glucose-6-phosphate transporter (SLC37A4/G6PT) the complex responsible for glucose production in the terminal step of glycogenolysis and gluconeogenesis. Hence, it is the key enzyme in homeostatic regulation of blood glucose levels. The sequence is that of Glucose-6-phosphatase catalytic subunit 1 (G6pc1) from Mus musculus (Mouse).